Reading from the N-terminus, the 177-residue chain is ATP synthase subunit delta, chloroplastic (177 aa).

The protein belongs to the ATPase delta chain family. As to quaternary structure, F-type ATPases have 2 components, F(1) - the catalytic core - and F(0) - the membrane proton channel. F(1) has five subunits: alpha(3), beta(3), gamma(1), delta(1), epsilon(1). CF(0) has four main subunits: a(1), b(1), b'(1) and c(10-14). The alpha and beta chains form an alternating ring which encloses part of the gamma chain. F(1) is attached to F(0) by a central stalk formed by the gamma and epsilon chains, while a peripheral stalk is formed by the delta, b and b' chains.

It localises to the plastid. Its subcellular location is the chloroplast thylakoid membrane. F(1)F(0) ATP synthase produces ATP from ADP in the presence of a proton or sodium gradient. F-type ATPases consist of two structural domains, F(1) containing the extramembraneous catalytic core and F(0) containing the membrane proton channel, linked together by a central stalk and a peripheral stalk. During catalysis, ATP synthesis in the catalytic domain of F(1) is coupled via a rotary mechanism of the central stalk subunits to proton translocation. In terms of biological role, this protein is part of the stalk that links CF(0) to CF(1). It either transmits conformational changes from CF(0) to CF(1) or is implicated in proton conduction. In Galdieria sulphuraria (Red alga), this protein is ATP synthase subunit delta, chloroplastic.